Reading from the N-terminus, the 248-residue chain is ATP synthase subunit a, chloroplastic (248 aa).

5 consecutive transmembrane segments (helical) span residues 38-58, 96-116, 135-155, 200-220, and 221-241; these read QVLITSWVVIAILLGSAAIAV, VPFIGTLFLFIFVSNWSGALL, INTTVALALLTSVAYFYAGLT, LVVVVLVSLVPLVIPIPVMFL, and GLFTSGIQALIFATLAAAYIG.

Belongs to the ATPase A chain family. F-type ATPases have 2 components, CF(1) - the catalytic core - and CF(0) - the membrane proton channel. CF(1) has five subunits: alpha(3), beta(3), gamma(1), delta(1), epsilon(1). CF(0) has four main subunits: a, b, b' and c.

The protein resides in the plastid. It is found in the chloroplast thylakoid membrane. Functionally, key component of the proton channel; it plays a direct role in the translocation of protons across the membrane. This chain is ATP synthase subunit a, chloroplastic, found in Nuphar advena (Common spatterdock).